The following is a 214-amino-acid chain: MTLQPTFEGRTPEQCLNVHTDSHPDITGCQAALFEWAESYDSKDWDRLKQCIAPFLRIDYRAFLDKLWEKMPAEEFVAMVSHPHFLGNPLLKTQHFVGTMKWEKVDDSKIVGYHQMRVAHQKHLDSQMKEVVAKGHGHGSATVTYRKINGEWKFAGIEPNIRWTEFGGEGIFGPPEKEENGVAADDQVMNSNGSSEVEERNGHVVNKAVEVRSV.

Residues Tyr-40 and Tyr-60 each coordinate substrate. Residues His-95 and His-120 contribute to the active site.

It belongs to the scytalone dehydratase family.

It participates in secondary metabolite biosynthesis. Scytalone dehydratase-like protein; part of the gene cluster that mediates the biosynthesis of monodictyphenone, a prenyl xanthone derivative. The pathway begins with the synthesis of atrochrysone thioester by the polyketide synthase (PKS) mdpG. The atrochrysone carboxyl ACP thioesterase mdpF then breaks the thioester bond and releases the atrochrysone carboxylic acid from mdpG. The atrochrysone carboxylic acid is then converted to atrochrysone which is further transformed into emodin anthrone. The next step is performed by the anthrone oxygenase mdpH that catalyzes the oxidation of emodinanthrone to emodin. Emodin is further modified to yield monodictyphenone via several steps involving mdpB, mdpC mdpJ, mdpK and mdpL. These enzymes with xptA, xptB and xptC are also proposed to be involved in the synthesis of shamixanthone from emodin. Especially, direct reduction of emodin by the short chain dehydrogenase mdpC followed by dehydration catalyzed by the scytalone dehydratase-like protein mdpB gives loss of oxygen and formation of chrysophanol intermediate in two simple steps. In Emericella nidulans (strain FGSC A4 / ATCC 38163 / CBS 112.46 / NRRL 194 / M139) (Aspergillus nidulans), this protein is Scytalone dehydratase-like protein mdpB.